A 362-amino-acid chain; its full sequence is Cationic peroxidase SPC4 (362 aa).

The first 31 residues, Met-1–Asn-31, serve as a signal peptide directing secretion. Cystine bridges form between Cys-50–Cys-131, Cys-83–Cys-88, Cys-138–Cys-333, and Cys-218–Cys-245. The active-site Proton acceptor is His-81. Residues Asp-82, Val-85, Gly-87, Asp-89, and Ser-91 each contribute to the Ca(2+) site. The N-linked (GlcNAc...) asparagine glycan is linked to Asn-109. Thr-111 is a binding site for (indol-3-yl)acetate. A substrate-binding site is contributed by Pro-181. His-211 serves as a coordination point for heme b. Thr-212 contributes to the Ca(2+) binding site. N-linked (GlcNAc...) asparagine glycosylation occurs at Asn-234. The Ca(2+) site is built by Asp-257, Thr-260, Ala-263, and Asp-265. Residue Asn-332 is glycosylated (N-linked (GlcNAc...) asparagine).

The protein belongs to the peroxidase family. Classical plant (class III) peroxidase subfamily. As to quaternary structure, monomer. Heme b serves as cofactor. The cofactor is Ca(2+). Post-translationally, the proportions of glycoforms I and II are 35% and 65% respectively. Present in germinated and ungerminated grain, seedlings, and leaves and stem of the mature plant.

The protein resides in the secreted. It carries out the reaction 2 a phenolic donor + H2O2 = 2 a phenolic radical donor + 2 H2O. Its function is as follows. Removal of H(2)O(2), oxidation of toxic reductants, biosynthesis and degradation of lignin, suberization, auxin catabolism, response to environmental stresses such as wounding, pathogen attack and oxidative stress. These functions might be dependent on each isozyme/isoform in each plant tissue. Has a high preference for hydroxycinnamates as substrates. Substrate preference is ferulic acid &gt; p-coumaric acid &gt; N-acetyl tyrosine methyl ester &gt; N-acetyl-tyrosine &gt; tyrosine &gt; catechol &gt; Gly-Tyr-Gly. May be involved in the formation of diferulate linkages in the plant cell wall. The protein is Cationic peroxidase SPC4 of Sorghum bicolor (Sorghum).